Consider the following 179-residue polypeptide: Adenine phosphoribosyltransferase (179 aa).

Belongs to the purine/pyrimidine phosphoribosyltransferase family. As to quaternary structure, homodimer.

The protein localises to the cytoplasm. The catalysed reaction is AMP + diphosphate = 5-phospho-alpha-D-ribose 1-diphosphate + adenine. Its pathway is purine metabolism; AMP biosynthesis via salvage pathway; AMP from adenine: step 1/1. Functionally, catalyzes a salvage reaction resulting in the formation of AMP, that is energically less costly than de novo synthesis. The sequence is that of Adenine phosphoribosyltransferase from Helicobacter pylori (strain ATCC 700392 / 26695) (Campylobacter pylori).